A 583-amino-acid polypeptide reads, in one-letter code: Aspartate--tRNA(Asp/Asn) ligase (583 aa).

L-aspartate is bound at residue glutamate 172. The aspartate stretch occupies residues 196–199 (QMLK). Arginine 218 provides a ligand contact to L-aspartate. ATP is bound by residues 218 to 220 (RDE) and glutamine 227. Histidine 446 lines the L-aspartate pocket. Position 480 (glutamate 480) interacts with ATP. Arginine 487 serves as a coordination point for L-aspartate. 532–535 (GLDR) is an ATP binding site.

This sequence belongs to the class-II aminoacyl-tRNA synthetase family. Type 1 subfamily. In terms of assembly, homodimer.

It localises to the cytoplasm. It catalyses the reaction tRNA(Asx) + L-aspartate + ATP = L-aspartyl-tRNA(Asx) + AMP + diphosphate. Aspartyl-tRNA synthetase with relaxed tRNA specificity since it is able to aspartylate not only its cognate tRNA(Asp) but also tRNA(Asn). Reaction proceeds in two steps: L-aspartate is first activated by ATP to form Asp-AMP and then transferred to the acceptor end of tRNA(Asp/Asn). The protein is Aspartate--tRNA(Asp/Asn) ligase of Streptococcus mutans serotype c (strain ATCC 700610 / UA159).